An 88-amino-acid polypeptide reads, in one-letter code: Period circadian protein (88 aa).

The segment at 23–88 (VTNTSIAGTG…VTLTESLLNK (66 aa)) is disordered. Tandem repeats lie at residues 30–31 (GT), 33–34 (GT), 35–36 (GT), 37–38 (GT), 39–40 (GT), 41–42 (GT), 43–44 (GT), 45–46 (GT), 47–48 (GT), 49–50 (GT), 51–52 (GT), 53–54 (GT), 55–56 (GT), 57–58 (GT), 59–60 (GT), and 61–62 (GN). A 16 X 2 AA tandem repeats of G-[TN] region spans residues 30 to 62 (GTGGTGTGTGTGTGTGTGTGTGTGTGTGTGTGN). Positions 30-62 (GTGGTGTGTGTGTGTGTGTGTGTGTGTGTGTGN) are enriched in gly residues. Polar residues predominate over residues 79 to 88 (VTLTESLLNK).

Forms a heterodimer with timeless (TIM); the complex then translocates into the nucleus. Phosphorylated with a circadian rhythmicity, probably by the double-time protein (dbt). Phosphorylation could be implicated in the stability of per monomer and in the formation of heterodimer per-tim.

It is found in the nucleus. The protein localises to the cytoplasm. Its subcellular location is the perinuclear region. Functionally, essential for biological clock functions. Determines the period length of circadian and ultradian rhythms; an increase in PER dosage leads to shortened circadian rhythms and a decrease leads to lengthened circadian rhythms. Essential for the circadian rhythmicity of locomotor activity, eclosion behavior, and for the rhythmic component of the male courtship song that originates in the thoracic nervous system. The biological cycle depends on the rhythmic formation and nuclear localization of the TIM-PER complex. Light induces the degradation of TIM, which promotes elimination of PER. Nuclear activity of the heterodimer coordinatively regulates PER and TIM transcription through a negative feedback loop. Behaves as a negative element in circadian transcriptional loop. Does not appear to bind DNA, suggesting indirect transcriptional inhibition. This is Period circadian protein (per) from Drosophila teissieri (Fruit fly).